A 273-amino-acid chain; its full sequence is Type II restriction enzyme HgiCII (273 aa).

Belongs to the TdeIII type II restriction endonuclease family.

The enzyme catalyses Endonucleolytic cleavage of DNA to give specific double-stranded fragments with terminal 5'-phosphates.. A P subtype restriction enzyme that recognizes the double-stranded sequence 5'-GGWCC-3' and cleaves after G-1. This chain is Type II restriction enzyme HgiCII, found in Herpetosiphon aurantiacus (Herpetosiphon giganteus).